We begin with the raw amino-acid sequence, 570 residues long: MVIMVDKYEALQDLMRRRGFVWSSFEIYGGARGFYDYGPLGAIIKRKIEKKIREAFIREGFFEIETPDITPEEVFIASGHVDKFVDPLTECKKCGSRFRADHIVEEVLGIDTEGLSAEHLTQLIREHDIKCPECGGELADVWYFNLMFETYIGPYKDKKGYLRPETAQGIFVNFKRLNNFARNQLPFGVFQIGKAYRNEISPRQGMLRLREFSQAEVEIFFDPKQKEHPHFEEVKDEVLRFYPIENQLKNLGMIELTLDEAVKKGYVMNTFFAYYMAMVKRILLDIGIPANKIRFRQQLPEERAHYSSDTWDVEIHSERFGWIECVGIAYRGNYDLSRHVKESGADLTVMIHYKEPKIIKKLKISLNMKRVGPKLKGDAKRINQKLQEMTQEELKKIFEGLEKIGKVFLDGYELEKEDFIIKEVEEKVHGEKLVPHVLEPSFGIDRPFYLLLENSIVMDEDSRVYLKIKKDMAPIEVAVLPLVAKEPLTSIAYEIFRTLQKEGFIVVYDEKDTVGRRYARYDEIGTPYCVTIDNQTPEDNTVTIRDRDTREQIRVKIEELPEKLRELIFG.

Substrate contacts are provided by R99 and E165. ATP-binding positions include 197 to 199 (RNE), 207 to 212 (LRLREF), 324 to 325 (EC), and 443 to 446 (GIDR). A substrate-binding site is contributed by 212-216 (FSQAE). 439-443 (EPSFG) is a binding site for substrate.

It belongs to the class-II aminoacyl-tRNA synthetase family.

The protein localises to the cytoplasm. It catalyses the reaction tRNA(Gly) + glycine + ATP = glycyl-tRNA(Gly) + AMP + diphosphate. Its function is as follows. Catalyzes the attachment of glycine to tRNA(Gly). This is Glycine--tRNA ligase from Thermococcus sibiricus (strain DSM 12597 / MM 739).